The primary structure comprises 84 residues: RNA-binding protein Hfq (84 aa).

One can recognise a Sm domain in the interval 11–71; sequence DTFLNHVRKN…ISTIMPGHPV (61 aa).

Belongs to the Hfq family. As to quaternary structure, homohexamer.

RNA chaperone that binds small regulatory RNA (sRNAs) and mRNAs to facilitate mRNA translational regulation in response to envelope stress, environmental stress and changes in metabolite concentrations. Also binds with high specificity to tRNAs. The protein is RNA-binding protein Hfq of Methylorubrum populi (strain ATCC BAA-705 / NCIMB 13946 / BJ001) (Methylobacterium populi).